We begin with the raw amino-acid sequence, 366 residues long: MRDETPEQPALLRSGYTTGSCATVTSLAAARLLLSGIASDVAEIVLPKGQHVPMKLVFCRLLNDGKDGAEAGTIKDAGDDPDVTHGAIVFARVRLADAPGVRFHAGPGVGTVTRAGLTLAVGEPAINPVPRQMMTAHLTDLAAEYGYAGGFEVAIGVENGEALAQKTMNPRLGIVGGLSILGTTGIVRPFSCSAYIASIHQGIDVARANGYRHIAACTGNASEDAMRAYYQLPDIALIEMGDFAGAVLKHLKRAPVDKLSMCGGFGKLSKLAAGHLDLHSRNSSIDLRQLAQWCASHAASNATLQAAIVGANTSQEALAMALKEGVPLGDIVCARARDVAREIVPASVEVEMFAIDRQGNIVGEAR.

It belongs to the CbiD family.

The enzyme catalyses Co-precorrin-5B + S-adenosyl-L-methionine = Co-precorrin-6A + S-adenosyl-L-homocysteine. The protein operates within cofactor biosynthesis; adenosylcobalamin biosynthesis; cob(II)yrinate a,c-diamide from sirohydrochlorin (anaerobic route): step 6/10. In terms of biological role, catalyzes the methylation of C-1 in cobalt-precorrin-5B to form cobalt-precorrin-6A. This Paraburkholderia phymatum (strain DSM 17167 / CIP 108236 / LMG 21445 / STM815) (Burkholderia phymatum) protein is Cobalt-precorrin-5B C(1)-methyltransferase.